The primary structure comprises 438 residues: NADH-quinone oxidoreductase subunit D (438 aa).

Belongs to the complex I 49 kDa subunit family. As to quaternary structure, NDH-1 is composed of 14 different subunits. Subunits NuoB, C, D, E, F, and G constitute the peripheral sector of the complex.

It localises to the cell membrane. It carries out the reaction a quinone + NADH + 5 H(+)(in) = a quinol + NAD(+) + 4 H(+)(out). NDH-1 shuttles electrons from NADH, via FMN and iron-sulfur (Fe-S) centers, to quinones in the respiratory chain. The immediate electron acceptor for the enzyme in this species is believed to be a menaquinone. Couples the redox reaction to proton translocation (for every two electrons transferred, four hydrogen ions are translocated across the cytoplasmic membrane), and thus conserves the redox energy in a proton gradient. The chain is NADH-quinone oxidoreductase subunit D from Rhodococcus jostii (strain RHA1).